The following is a 344-amino-acid chain: Phenylalanine--tRNA ligase alpha subunit (344 aa).

Glu-256 contributes to the Mg(2+) binding site.

Belongs to the class-II aminoacyl-tRNA synthetase family. Phe-tRNA synthetase alpha subunit type 1 subfamily. In terms of assembly, tetramer of two alpha and two beta subunits. Requires Mg(2+) as cofactor.

The protein resides in the cytoplasm. The enzyme catalyses tRNA(Phe) + L-phenylalanine + ATP = L-phenylalanyl-tRNA(Phe) + AMP + diphosphate + H(+). This chain is Phenylalanine--tRNA ligase alpha subunit, found in Anoxybacillus flavithermus (strain DSM 21510 / WK1).